The following is a 321-amino-acid chain: Epiphycan (321 aa).

Positions 1–19 are cleaved as a signal peptide; it reads MKALARLIVGLLILDAAVT. O-linked (GalNAc...) threonine glycosylation occurs at T60. O-linked (Xyl...) (dermatan sulfate) serine glycosylation occurs at S64. A disordered region spans residues 64–100; it reads SGNRELLTPPPQPEEAEEEEEEESTPRLIDGSSPQEP. Residues 77–86 show a composition bias toward acidic residues; that stretch reads EEAEEEEEEE. The O-linked (GalNAc...) serine glycan is linked to S95. An LRRNT domain is found at 105 to 142; that stretch reads VLGPQTNEDFPTCLLCTCISTTVYCDDHELDAIPPLPK. Residues C117 and C129 are joined by a disulfide bond. LRR repeat units follow at residues 143–164, 167–188, 191–212, 237–257, and 258–279; these read NTAY…DFAS, DLRR…AFRK, QLRE…PTTL, DLHH…PLPE, and NLRA…TFCN. Cysteines 278 and 311 form a disulfide. N-linked (GlcNAc...) asparagine glycosylation occurs at N282. One copy of the LRR 6 repeat lies at 289–309; the sequence is ALEDIRLDGNPINLSKTPQAY.

This sequence belongs to the small leucine-rich proteoglycan (SLRP) family. SLRP class III subfamily. A long and a short form present in approximately equimolar amounts may arise by proteolysis or cleavage by exopeptidases. Post-translationally, the O-linked polysaccharides on Thr-60 and Ser-95 are probably the mucin type linked to GalNAc. There is one glycosaminoglycan chain, known to be dermatan sulfate, and it is probably the O-glycosylation at Ser-64. As to expression, preferentially expressed in the zone of flattened chondrocytes of the developing limb cartilage.

The protein localises to the secreted. Its subcellular location is the extracellular space. It is found in the extracellular matrix. In terms of biological role, may have a role in bone formation and also in establishing the ordered structure of cartilage through matrix organization. The sequence is that of Epiphycan (EPYC) from Bos taurus (Bovine).